The chain runs to 366 residues: tRNA N6-adenosine threonylcarbamoyltransferase (366 aa).

3 residues coordinate a divalent metal cation: H130, H134, and Y151. Substrate is bound by residues 151 to 155 (YVSGG), D183, G198, E202, and N297. Residue D325 participates in a divalent metal cation binding.

It belongs to the KAE1 / TsaD family. Component of the EKC/KEOPS complex composed of at least BUD32, CGI121, GON7, KAE1 and PCC1; the whole complex dimerizes. Requires a divalent metal cation as cofactor.

The protein localises to the cytoplasm. Its subcellular location is the nucleus. It carries out the reaction L-threonylcarbamoyladenylate + adenosine(37) in tRNA = N(6)-L-threonylcarbamoyladenosine(37) in tRNA + AMP + H(+). Functionally, component of the EKC/KEOPS complex that is required for the formation of a threonylcarbamoyl group on adenosine at position 37 (t(6)A37) in tRNAs that read codons beginning with adenine. The complex is probably involved in the transfer of the threonylcarbamoyl moiety of threonylcarbamoyl-AMP (TC-AMP) to the N6 group of A37. KAE1 likely plays a direct catalytic role in this reaction, but requires other protein(s) of the complex to fulfill this activity. The EKC/KEOPS complex also promotes both telomere uncapping and telomere elongation. The complex is required for efficient recruitment of transcriptional coactivators. The sequence is that of tRNA N6-adenosine threonylcarbamoyltransferase from Cryptococcus neoformans var. neoformans serotype D (strain JEC21 / ATCC MYA-565) (Filobasidiella neoformans).